We begin with the raw amino-acid sequence, 445 residues long: Ribosomal protein uS12 methylthiotransferase RimO (445 aa).

An MTTase N-terminal domain is found at 4 to 119 (IKVALVSLGC…LLESIKVFLK (116 aa)). Cys-13, Cys-48, Cys-82, Cys-156, Cys-160, and Cys-163 together coordinate [4Fe-4S] cluster. A Radical SAM core domain is found at 142–372 (TTPTYTAYVR…MILQQSISKD (231 aa)). The region spanning 375–441 (KEKIGKIYEV…EYDLIGVVYN (67 aa)) is the TRAM domain.

It belongs to the methylthiotransferase family. RimO subfamily. Requires [4Fe-4S] cluster as cofactor.

The protein localises to the cytoplasm. The enzyme catalyses L-aspartate(89)-[ribosomal protein uS12]-hydrogen + (sulfur carrier)-SH + AH2 + 2 S-adenosyl-L-methionine = 3-methylsulfanyl-L-aspartate(89)-[ribosomal protein uS12]-hydrogen + (sulfur carrier)-H + 5'-deoxyadenosine + L-methionine + A + S-adenosyl-L-homocysteine + 2 H(+). Its function is as follows. Catalyzes the methylthiolation of an aspartic acid residue of ribosomal protein uS12. This Clostridium botulinum (strain Okra / Type B1) protein is Ribosomal protein uS12 methylthiotransferase RimO.